The sequence spans 610 residues: Nuclear factor 7, ovary (610 aa).

Positions 21-75 (NVGSTYPCKRSDGSQHDADIVKTRYNKQAGREEYYVHYVGLNRRQNEWVDKSRLV) constitute a Tudor-knot domain. The tract at residues 79-127 (PPKEVETNGTDQEEMTEPTEQPDSKTPQKRKLEEPEPEPKKAKVEDKDA) is disordered. The residue at position 104 (threonine 104) is a Phosphothreonine; by CDK1. The segment covering 108–127 (RKLEEPEPEPKKAKVEDKDA) has biased composition (basic and acidic residues). An RING-type zinc finger spans residues 146 to 186 (CPLCVELFKDPVMVACGHNFCRSCIDKVWEGQSSFACPECK). The segment at 220–261 (RPLEKCSEHDERLKLYCKDDGTLGCVICRDSLKHASHNFLPI) adopts a B box-type zinc-finger fold. Zn(2+)-binding residues include cysteine 225, histidine 228, cysteine 247, and histidine 253. Residues 295–374 (DKIEQHNKNV…AKERMEETDS (80 aa)) are a coiled coil. The B30.2/SPRY domain occupies 415–610 (PIQYIMWKEL…VDALRFVHNQ (196 aa)).

Monomer. As to expression, abundant in oocytes. At the neurula stage, low expression in dorsal embryo region including neural folds and somites.

Its subcellular location is the nucleus. Transcription factor that determines dorsal-ventral body axis. The polypeptide is Nuclear factor 7, ovary (Xenopus laevis (African clawed frog)).